The sequence spans 118 residues: Ribonuclease P protein component (118 aa).

Belongs to the RnpA family. In terms of assembly, consists of a catalytic RNA component (M1 or rnpB) and a protein subunit.

The enzyme catalyses Endonucleolytic cleavage of RNA, removing 5'-extranucleotides from tRNA precursor.. Its function is as follows. RNaseP catalyzes the removal of the 5'-leader sequence from pre-tRNA to produce the mature 5'-terminus. It can also cleave other RNA substrates such as 4.5S RNA. The protein component plays an auxiliary but essential role in vivo by binding to the 5'-leader sequence and broadening the substrate specificity of the ribozyme. The chain is Ribonuclease P protein component from Ureaplasma urealyticum serovar 10 (strain ATCC 33699 / Western).